A 102-amino-acid polypeptide reads, in one-letter code: uncharacterized protein (102 aa).

Residues 1-41 form a disordered region; that stretch reads MAAPRQIAFYGKGGTGKPKRKPEPVTASKEDRCLGSPSKNK.

The protein to the N-terminal of nitrogenase iron protein (NifH). Has lost the ATP-binding site.

This protein is either not expressed, expressed at low levels or rapidly degraded. This is an uncharacterized protein from Rhizobium meliloti (Ensifer meliloti).